The primary structure comprises 423 residues: Adenylosuccinate synthetase (423 aa).

Residues 12–18 and 40–42 contribute to the GTP site; these read GDEGKGK and GHT. Aspartate 13 (proton acceptor) is an active-site residue. Mg(2+) contacts are provided by aspartate 13 and glycine 40. Residues 13–16, 38–41, threonine 129, arginine 143, glutamine 221, threonine 236, and arginine 300 contribute to the IMP site; these read DEGK and NAGH. Histidine 41 serves as the catalytic Proton donor. 296-302 serves as a coordination point for substrate; that stretch reads SVTGRKR. Residues arginine 302 and 408 to 410 each bind GTP; that span reads SVG.

The protein belongs to the adenylosuccinate synthetase family. Homodimer. Mg(2+) is required as a cofactor.

Its subcellular location is the cytoplasm. It carries out the reaction IMP + L-aspartate + GTP = N(6)-(1,2-dicarboxyethyl)-AMP + GDP + phosphate + 2 H(+). The protein operates within purine metabolism; AMP biosynthesis via de novo pathway; AMP from IMP: step 1/2. Plays an important role in the de novo pathway of purine nucleotide biosynthesis. Catalyzes the first committed step in the biosynthesis of AMP from IMP. The polypeptide is Adenylosuccinate synthetase (Bacteroides thetaiotaomicron (strain ATCC 29148 / DSM 2079 / JCM 5827 / CCUG 10774 / NCTC 10582 / VPI-5482 / E50)).